The chain runs to 156 residues: Protein OXIDATIVE STRESS 3 LIKE 3 (156 aa).

The tract at residues 1–67 (MHYQEQMESL…GLSKHYKGKS (67 aa)) is disordered. The segment covering 13–26 (GEERRRGNYTRDVD) has biased composition (basic and acidic residues).

It is found in the nucleus. In terms of biological role, promotes slightly the tolerance to oxidizing chemicals (e.g. diamide). This Arabidopsis thaliana (Mouse-ear cress) protein is Protein OXIDATIVE STRESS 3 LIKE 3.